The following is a 194-amino-acid chain: Large ribosomal subunit protein uL6z/uL6y (194 aa).

Phosphothreonine is present on threonine 75.

It belongs to the universal ribosomal protein uL6 family.

The polypeptide is Large ribosomal subunit protein uL6z/uL6y (RPL9B) (Arabidopsis thaliana (Mouse-ear cress)).